A 235-amino-acid chain; its full sequence is Voltage-gated hydrogen channel 1 (235 aa).

Topologically, residues 1–62 are cytoplasmic; the sequence is MSRYLKHFTV…VMKKLFSSRR (62 aa). A helical transmembrane segment spans residues 63-83; that stretch reads FQIVIVFLVIVDALLVLGELL. The Extracellular segment spans residues 84 to 100; the sequence is MDLKIIHPDKYHIAPKV. The chain crosses the membrane as a helical span at residues 101-123; the sequence is FHYLSLSILTIFLVEVGFKIFVY. Topologically, residues 124–131 are cytoplasmic; that stretch reads GREFFHHK. Residues 132 to 152 form a helical membrane-spanning segment; that stretch reads FEVLDSIVVVVSFILDLVLLF. Residues 153–159 lie on the Extracellular side of the membrane; it reads REHEFEA. A helical transmembrane segment spans residues 160-180; that stretch reads VGLLILLRLWRVARIINGIIL. Topologically, residues 181 to 235 are cytoplasmic; it reads SVKTRSEQQVSKLKQVNLKLATKVEQLQHSCVEKEQEIERLTRMLKQHGLLSEQT. A coiled-coil region spans residues 187 to 228; that stretch reads EQQVSKLKQVNLKLATKVEQLQHSCVEKEQEIERLTRMLKQH.

This sequence belongs to the hydrogen channel family. Homodimer.

The protein resides in the membrane. The protein localises to the cell membrane. Its function is as follows. Mediates the voltage-dependent proton permeability of excitable membranes. Forms a proton-selective channel through which protons may pass in accordance with their electrochemical gradient. This chain is Voltage-gated hydrogen channel 1 (HVCN1), found in Gallus gallus (Chicken).